Here is a 96-residue protein sequence, read N- to C-terminus: MEQAPEDQGPQREPYHEWTLELLEELKNEAVRHFPRPWLHGLGQYVYSTYGDTWEGVEAVIRILQQLLFIHFRIGCHHSRIGIIPQRRGRNGASRS.

The tract at residues 1–42 is homooligomerization; that stretch reads MEQAPEDQGPQREPYHEWTLELLEELKNEAVRHFPRPWLHGL. S79, S94, and S96 each carry phosphoserine; by host.

This sequence belongs to the HIV-1 VPR protein family. Homooligomer, may form homodimer. Interacts with p6-gag region of the Pr55 Gag precursor protein through a (Leu-X-X)4 motif near the C-terminus of the P6gag protein. Interacts with host UNG. May interact with host RAD23A/HHR23A. Interacts with host VPRBP/DCAF1, leading to hijack the CUL4A-RBX1-DDB1-DCAF1/VPRBP complex, mediating ubiquitination of host proteins such as TERT and ZGPAT and arrest of the cell cycle in G2 phase. Post-translationally, phosphorylated on several residues by host. These phosphorylations regulate VPR activity for the nuclear import of the HIV-1 pre-integration complex.

It localises to the virion. The protein localises to the host nucleus. The protein resides in the host extracellular space. Functionally, during virus replication, may deplete host UNG protein, and incude G2-M cell cycle arrest. Acts by targeting specific host proteins for degradation by the 26S proteasome, through association with the cellular CUL4A-DDB1 E3 ligase complex by direct interaction with host VPRPB/DCAF-1. Cell cycle arrest reportedly occurs within hours of infection and is not blocked by antiviral agents, suggesting that it is initiated by the VPR carried into the virion. Additionally, VPR induces apoptosis in a cell cycle dependent manner suggesting that these two effects are mechanistically linked. Detected in the serum and cerebrospinal fluid of AIDS patient, VPR may also induce cell death to bystander cells. In terms of biological role, during virus entry, plays a role in the transport of the viral pre-integration (PIC) complex to the host nucleus. This function is crucial for viral infection of non-dividing macrophages. May act directly at the nuclear pore complex, by binding nucleoporins phenylalanine-glycine (FG)-repeat regions. This is Protein Vpr from Homo sapiens (Human).